Here is a 524-residue protein sequence, read N- to C-terminus: 2,3-bisphosphoglycerate-independent phosphoglycerate mutase (524 aa).

Residues Asp-13 and Ser-63 each coordinate Mn(2+). Catalysis depends on Ser-63, which acts as the Phosphoserine intermediate. Residues His-124, 154–155, Arg-186, Arg-192, 262–265, and Lys-337 each bind substrate; these read RD and RADR. Mn(2+)-binding residues include Asp-404, His-408, Asp-445, His-446, and His-464.

It belongs to the BPG-independent phosphoglycerate mutase family. Monomer. The cofactor is Mn(2+).

It carries out the reaction (2R)-2-phosphoglycerate = (2R)-3-phosphoglycerate. It functions in the pathway carbohydrate degradation; glycolysis; pyruvate from D-glyceraldehyde 3-phosphate: step 3/5. Functionally, catalyzes the interconversion of 2-phosphoglycerate and 3-phosphoglycerate. In Thermomicrobium roseum (strain ATCC 27502 / DSM 5159 / P-2), this protein is 2,3-bisphosphoglycerate-independent phosphoglycerate mutase.